The sequence spans 383 residues: 8-amino-7-oxononanoate synthase (383 aa).

Arginine 21 is a substrate binding site. 108 to 109 (GF) is a pyridoxal 5'-phosphate binding site. Histidine 133 is a binding site for substrate. Positions 179, 207, and 233 each coordinate pyridoxal 5'-phosphate. N6-(pyridoxal phosphate)lysine is present on lysine 236. A substrate-binding site is contributed by threonine 350.

It belongs to the class-II pyridoxal-phosphate-dependent aminotransferase family. BioF subfamily. In terms of assembly, homodimer. The cofactor is pyridoxal 5'-phosphate.

It carries out the reaction 6-carboxyhexanoyl-[ACP] + L-alanine + H(+) = (8S)-8-amino-7-oxononanoate + holo-[ACP] + CO2. It participates in cofactor biosynthesis; biotin biosynthesis. In terms of biological role, catalyzes the decarboxylative condensation of pimeloyl-[acyl-carrier protein] and L-alanine to produce 8-amino-7-oxononanoate (AON), [acyl-carrier protein], and carbon dioxide. The chain is 8-amino-7-oxononanoate synthase from Cronobacter sakazakii (strain ATCC BAA-894) (Enterobacter sakazakii).